We begin with the raw amino-acid sequence, 291 residues long: Glycolipid transfer protein domain-containing protein 2 (291 aa).

Residue asparagine 276 is glycosylated (N-linked (GlcNAc...) asparagine).

It belongs to the GLTP family.

In Homo sapiens (Human), this protein is Glycolipid transfer protein domain-containing protein 2 (GLTPD2).